A 288-amino-acid polypeptide reads, in one-letter code: NAD(P)H quinone oxidoreductase YCP4 (288 aa).

One can recognise a Flavodoxin-like domain in the interval isoleucine 3–phenylalanine 192. FMN-binding positions include serine 9–histidine 13 and valine 110–glycine 164. Residues glycine 202–methionine 288 are disordered. Positions lysine 205–serine 254 are enriched in low complexity. Polar residues predominate over residues asparagine 261–methionine 288.

Belongs to the WrbA family. The cofactor is FMN.

The protein resides in the cell membrane. The catalysed reaction is a quinone + NADH + H(+) = a quinol + NAD(+). The enzyme catalyses a quinone + NADPH + H(+) = a quinol + NADP(+). Flavodoxin-like protein (FLP) that plays a role in cell wall integrity, oxidative stress protection and virulence. FLPs act as NAD(P)H quinone oxidoreductases. Reduces ubiquinone (coenzyme Q), enabling it to serve as an antioxidant in the membrane. This is NAD(P)H quinone oxidoreductase YCP4 from Candida albicans (strain SC5314 / ATCC MYA-2876) (Yeast).